A 1420-amino-acid chain; its full sequence is tRNA (32-2'-O)-methyltransferase regulator TRM732 (1420 aa).

Residues 748-754 (RRSGGLP) form a required for activity region.

This sequence belongs to the THADA family. In terms of assembly, interacts with TRM7; for 2'-O-methylation of position 32 in substrate tRNAs.

It is found in the cytoplasm. Functionally, together with methyltransferase TRM7, methylates the 2'-O-ribose of nucleotides at position 32 of the anticodon loop of substrate tRNAs. In Saccharomyces cerevisiae (strain ATCC 204508 / S288c) (Baker's yeast), this protein is tRNA (32-2'-O)-methyltransferase regulator TRM732 (TRM732).